The primary structure comprises 170 residues: Peptide deformylase (170 aa).

Fe cation-binding residues include Cys91 and His133. Residue Glu134 is part of the active site. A Fe cation-binding site is contributed by His137.

This sequence belongs to the polypeptide deformylase family. Requires Fe(2+) as cofactor.

The catalysed reaction is N-terminal N-formyl-L-methionyl-[peptide] + H2O = N-terminal L-methionyl-[peptide] + formate. Functionally, removes the formyl group from the N-terminal Met of newly synthesized proteins. Requires at least a dipeptide for an efficient rate of reaction. N-terminal L-methionine is a prerequisite for activity but the enzyme has broad specificity at other positions. The polypeptide is Peptide deformylase (Yersinia enterocolitica serotype O:8 / biotype 1B (strain NCTC 13174 / 8081)).